Here is a 640-residue protein sequence, read N- to C-terminus: MARRGGAAASSSMANLLGVALVLAATAQTSARGGGGGGRHDYRMALSKSILYFEAQRSGVLPGNQRIAWRANSGLADGKANGVDLVGGYYDAGDNVKFGFPMAFTVTMMAWSVLEYGKQMAAAGELGHAMDAVRWGADYFVKAHPAPNVLYGEVGDGDSDHVCWQRPEDMTTSRQAYRLDPQHPGSDLAGETATALAAASLVFRSSNPGYANQLLQHSKQLFDFADKYRGKYDDSMPVVKKFYGSFSGYGDELLWASAWLYQATDNRRYLDYLANNGDALGGTGWATNEFGWDVKYPGVQVLAAKFLLQGKAGPHAAVLRRYQRNADVFACSCLGKGGGGGNVGRTPGGLMYHQGWNNLQFVTGASFLLAVYADHLAAAGRGQAVVRCQAGPAARASELVALAKSQVDYILGSNPRGISYMVGYGARYPRRAHHRGASIVSIRANPSFVSCKDGYASWFGRAGSNPNLLDGAVVGGPDGRDGFADERNNYQQTEVATYNNAPLMGVLARLAGGGRGGLAEAAIKRPDNQTLLPPLAAAASPVEITQLNATASWKKDGRTYRRYAATVSNRSPAGGKTVEELHIGIGKPHGPVWGLEKAARYGYVLPSSLAAGESAAFAYVVRGRAAPPPADVWVIGYKLV.

The first 24 residues, 1 to 24 (MARRGGAAASSSMANLLGVALVLA), serve as a signal peptide directing secretion. Asp-94 functions as the Nucleophile in the catalytic mechanism. Catalysis depends on residues His-433, Asp-485, and Glu-494. N-linked (GlcNAc...) asparagine glycosylation is found at Asn-528 and Asn-548.

Belongs to the glycosyl hydrolase 9 (cellulase E) family. In terms of tissue distribution, expressed in roots, leaf sheaths and flowers.

It is found in the secreted. The enzyme catalyses Endohydrolysis of (1-&gt;4)-beta-D-glucosidic linkages in cellulose, lichenin and cereal beta-D-glucans.. The sequence is that of Endoglucanase 1 (GLU7) from Oryza sativa subsp. japonica (Rice).